The primary structure comprises 169 residues: MICOS complex subunit MIC19 (169 aa).

A lipid anchor (N-myristoyl glycine) is attached at G2. Residues 123–165 (ENVCQDNENEIVRCLQENPGRVLKCAPLTEAFEKCVGEFRQQV) form the CHCH domain. 2 short sequence motifs (cx9C motif) span residues 126 to 136 (CQDNENEIVRC) and 147 to 157 (CAPLTEAFEKC). 2 disulfides stabilise this stretch: C126–C157 and C136–C147.

This sequence belongs to the MICOS complex subunit Mic19 family. Metazoan Mic19 subfamily. Component of the mitochondrial contact site and cristae organizing system (MICOS) complex.

Its subcellular location is the mitochondrion inner membrane. Its function is as follows. Plays a role in maintaining mitochondrial morphology. May act as a component of the MICOS complex, a large protein complex of the mitochondria. The chain is MICOS complex subunit MIC19 from Caenorhabditis elegans.